The sequence spans 504 residues: Ammonium transporter 1 member 4 (504 aa).

12 helical membrane-spanning segments follow: residues 12–32 (LIPLLSGGANATAAAAAAEYI), 55–75 (LLFSAYLVFAMQLGFAMLCAG), 90–110 (VIDAAAGGLFYYLFGFAFAFG), 136–156 (YFLYQWTFAIAAAGITSGSIA), 161–181 (FVAYLIYSSFLTGLVYPIVSH), 207–227 (FAGSGVVHMVGGIAGLWGALI), 251–271 (LVVLGTFLLWFGWYGFNPGSF), 292–314 (AVGRTAVTTTLAGCTAALTTLFG), 318–338 (IDGYWNVTDVCNGLLGGFAAI), 344–364 (VVEPWAALVCGFVAAWVLMGC), 377–397 (LEAAQLHGGCGAWGIIFTGLF), and 430–450 (VVQILVITGWVSVTMGTLFFI). Thr471 is modified (phosphothreonine).

It belongs to the ammonia transporter channel (TC 1.A.11.2) family. As to expression, specifically expressed in pollen grains and tubes.

It is found in the cell membrane. In terms of biological role, high affinity ammonium transporter in the plasma membrane. The protein is Ammonium transporter 1 member 4 (AMT1-4) of Arabidopsis thaliana (Mouse-ear cress).